The primary structure comprises 187 residues: Phosphatidylethanolamine-binding protein 1 (187 aa).

Ser-6 and Ser-13 each carry phosphoserine. Thr-42 is modified (phosphothreonine). Ser-52, Ser-54, Ser-98, and Ser-153 each carry phosphoserine. The interaction with RAF1 stretch occupies residues 93–134 (KGNDISSGTVLSDYVGSGPPKGTGLHRYVWLVYEQDRPLKCD).

This sequence belongs to the phosphatidylethanolamine-binding protein family. Has a tendency to form dimers by disulfide cross-linking. Interacts with RAF1 and this interaction is enhanced if RAF1 is phosphorylated on residues 'Ser-338', 'Ser-339', 'Tyr-340' and 'Tyr-341'. Interacts with ALOX15; in response to IL13/interleukin-13, prevents the interaction of PEBP1 with RAF1 to activate the ERK signaling cascade.

The protein resides in the cytoplasm. Its function is as follows. Binds ATP, opioids and phosphatidylethanolamine. Has lower affinity for phosphatidylinositol and phosphatidylcholine. Serine protease inhibitor which inhibits thrombin, neuropsin and chymotrypsin but not trypsin, tissue type plasminogen activator and elastase. Inhibits the kinase activity of RAF1 by inhibiting its activation and by dissociating the RAF1/MEK complex and acting as a competitive inhibitor of MEK phosphorylation. HCNP may be involved in the function of the presynaptic cholinergic neurons of the central nervous system. HCNP increases the production of choline acetyltransferase but not acetylcholinesterase. Seems to be mediated by a specific receptor. The polypeptide is Phosphatidylethanolamine-binding protein 1 (PEBP1) (Pongo abelii (Sumatran orangutan)).